The chain runs to 114 residues: UPF0342 protein PEPE_0673 (114 aa).

This sequence belongs to the UPF0342 family.

The sequence is that of UPF0342 protein PEPE_0673 from Pediococcus pentosaceus (strain ATCC 25745 / CCUG 21536 / LMG 10740 / 183-1w).